Here is a 406-residue protein sequence, read N- to C-terminus: CinA-like protein (406 aa).

The protein belongs to the CinA family.

The polypeptide is CinA-like protein (Pseudothermotoga lettingae (strain ATCC BAA-301 / DSM 14385 / NBRC 107922 / TMO) (Thermotoga lettingae)).